Consider the following 484-residue polypeptide: Toluene efflux pump outer membrane protein TtgC (484 aa).

The signal sequence occupies residues methionine 1 to glycine 17. Cysteine 18 carries N-palmitoyl cysteine lipidation. Residue cysteine 18 is the site of S-diacylglycerol cysteine attachment.

It belongs to the outer membrane factor (OMF) (TC 1.B.17) family.

Its subcellular location is the cell outer membrane. Its function is as follows. The outer membrane component of a constitutive organic solvent efflux system. Is involved in export of toluene, styrene, m-xylene, propylbenzene and ethylbenzene. Also exports AMP and the antibiotics carbenicillin, nalidixic acid, chloramphenicol and tetracycline. The sequence is that of Toluene efflux pump outer membrane protein TtgC (ttgC) from Pseudomonas putida (strain DOT-T1E).